Reading from the N-terminus, the 316-residue chain is Aspartate carbamoyltransferase catalytic subunit (316 aa).

Residues Arg56 and Thr57 each coordinate carbamoyl phosphate. Lys84 serves as a coordination point for L-aspartate. Carbamoyl phosphate contacts are provided by Arg106, His139, and Gln142. Positions 172 and 224 each coordinate L-aspartate. Carbamoyl phosphate-binding residues include Gly268 and Pro269.

It belongs to the aspartate/ornithine carbamoyltransferase superfamily. ATCase family. Heterododecamer (2C3:3R2) of six catalytic PyrB chains organized as two trimers (C3), and six regulatory PyrI chains organized as three dimers (R2).

The enzyme catalyses carbamoyl phosphate + L-aspartate = N-carbamoyl-L-aspartate + phosphate + H(+). Its pathway is pyrimidine metabolism; UMP biosynthesis via de novo pathway; (S)-dihydroorotate from bicarbonate: step 2/3. Functionally, catalyzes the condensation of carbamoyl phosphate and aspartate to form carbamoyl aspartate and inorganic phosphate, the committed step in the de novo pyrimidine nucleotide biosynthesis pathway. This chain is Aspartate carbamoyltransferase catalytic subunit, found in Ligilactobacillus salivarius (strain UCC118) (Lactobacillus salivarius).